The primary structure comprises 547 residues: MAQEMRYFSTRGGKETLSFEDAVLTGLAPNGGLYIPTHIPALPKDWKTKWAGLSFPELSHEILSLFVPTSVIPSDDLQSIINTAYSSFRSPATTPIRQTGDNEYVLELWHGPTWAFKDVALQFLGELFRYFLERRNKDKTEDMEELTVVGATSGDTGSAAIYGLRSKPSITIFILYPDGRVSPIQEAQMATVPDANVYCVAVEDSDFDTCQSIVKTLFSDAQFNATHRLGAINSINWARILAQIVYYFSAYFQLPEEARKDGAKLQFVVPTGNFGDILAGWYAKKLGLPMEQLVVATNENDILERFFRTGRYEADDAVQQDQTAETAAVNGSSDGQQAVSAVKATHSPAMDILLSSNFERLLYYLALETNGTEGSDEEKRFKAQERLNDWMSTLKKDGKVDLGEDVRQAAGKDFWAERVSDGQTLEEIQKYYRREKYGPYVVDPHTAVGLTAQERSAKKASPDTTWITLSTAHPAKFSGAVELALSASEFPDFDFRRDVLPDELKKLEGLEKRVHRVKGEEGVRALIEKVKSASHEKVDAEEGRGSL.

Lys-117 bears the N6-(pyridoxal phosphate)lysine mark. Pyridoxal 5'-phosphate-binding residues include Gly-272, Asn-273, Phe-274, Asp-276, and Thr-471.

The protein belongs to the threonine synthase family. Pyridoxal 5'-phosphate is required as a cofactor.

It carries out the reaction O-phospho-L-homoserine + H2O = L-threonine + phosphate. The protein operates within amino-acid biosynthesis; L-threonine biosynthesis; L-threonine from L-aspartate: step 5/5. Its function is as follows. Catalyzes the gamma-elimination of phosphate from L-phosphohomoserine and the beta-addition of water to produce L-threonine. This chain is Threonine synthase, found in Cryptococcus neoformans var. grubii serotype A (strain H99 / ATCC 208821 / CBS 10515 / FGSC 9487) (Filobasidiella neoformans var. grubii).